The chain runs to 187 residues: Ubiquinone biosynthesis protein COQ4 homolog, mitochondrial (187 aa).

The Zn(2+) site is built by histidine 77, aspartate 78, histidine 81, and glutamate 93.

This sequence belongs to the COQ4 family. In terms of assembly, component of a multi-subunit COQ enzyme complex. It depends on Zn(2+) as a cofactor.

It is found in the mitochondrion inner membrane. It carries out the reaction a 4-hydroxy-3-methoxy-5-(all-trans-polyprenyl)benzoate + H(+) = a 2-methoxy-6-(all-trans-polyprenyl)phenol + CO2. It functions in the pathway cofactor biosynthesis; ubiquinone biosynthesis. In terms of biological role, lyase that catalyzes the C1-decarboxylation of 4-hydroxy-3-methoxy-5-(all-trans-polyprenyl)benzoic acid into 2-methoxy-6-(all-trans-polyprenyl)phenol during ubiquinone biosynthesis. This is Ubiquinone biosynthesis protein COQ4 homolog, mitochondrial from Leishmania infantum.